The chain runs to 315 residues: Protein FRA10AC1 homolog (315 aa).

At Met1 the chain carries N-acetylmethionine. The segment at 1 to 28 is disordered; that stretch reads MHGHGGYDSDFSDDEQGGGSSKKRKKTV. Phosphoserine occurs at positions 9 and 12. At Lys36 the chain carries N6-acetyllysine. A compositionally biased stretch (basic residues) spans 225–235; that stretch reads KEIKSTKKKSK. The tract at residues 225–308 is disordered; it reads KEIKSTKKKS…EKSQEEEFDD (84 aa). Composition is skewed to basic and acidic residues over residues 236–245 and 255–278; these read TTPECDESPR and EASKGKDEGHSSSKKSEDSRNRNA. Ser283 and Ser285 each carry phosphoserine.

As to quaternary structure, interacts with ESS2.

It is found in the nucleus. In terms of biological role, may be involved in pre-mRNA splicing. The sequence is that of Protein FRA10AC1 homolog (Fra10ac1) from Mus musculus (Mouse).